The following is a 173-amino-acid chain: Crossover junction endodeoxyribonuclease RuvC (173 aa).

Catalysis depends on residues Asp-8, Glu-67, and Asp-139. Mg(2+)-binding residues include Asp-8, Glu-67, and Asp-139.

It belongs to the RuvC family. In terms of assembly, homodimer which binds Holliday junction (HJ) DNA. The HJ becomes 2-fold symmetrical on binding to RuvC with unstacked arms; it has a different conformation from HJ DNA in complex with RuvA. In the full resolvosome a probable DNA-RuvA(4)-RuvB(12)-RuvC(2) complex forms which resolves the HJ. Mg(2+) is required as a cofactor.

The protein localises to the cytoplasm. The enzyme catalyses Endonucleolytic cleavage at a junction such as a reciprocal single-stranded crossover between two homologous DNA duplexes (Holliday junction).. Functionally, the RuvA-RuvB-RuvC complex processes Holliday junction (HJ) DNA during genetic recombination and DNA repair. Endonuclease that resolves HJ intermediates. Cleaves cruciform DNA by making single-stranded nicks across the HJ at symmetrical positions within the homologous arms, yielding a 5'-phosphate and a 3'-hydroxyl group; requires a central core of homology in the junction. The consensus cleavage sequence is 5'-(A/T)TT(C/G)-3'. Cleavage occurs on the 3'-side of the TT dinucleotide at the point of strand exchange. HJ branch migration catalyzed by RuvA-RuvB allows RuvC to scan DNA until it finds its consensus sequence, where it cleaves and resolves the cruciform DNA. In Shigella flexneri serotype 5b (strain 8401), this protein is Crossover junction endodeoxyribonuclease RuvC.